Consider the following 280-residue polypeptide: Polyamine aminopropyltransferase 1 (280 aa).

One can recognise a PABS domain in the interval 3-237 (DIVFIERDPY…YWWTFSIASK (235 aa)). Q33 contributes to the S-methyl-5'-thioadenosine binding site. Residues H64 and D88 each contribute to the spermidine site. Residues D108 and 139–140 (DG) contribute to the S-methyl-5'-thioadenosine site. D157 acts as the Proton acceptor in catalysis. Residue 157 to 160 (DSTD) participates in spermidine binding.

The protein belongs to the spermidine/spermine synthase family. Homodimer or homotetramer.

It is found in the cytoplasm. The enzyme catalyses S-adenosyl 3-(methylsulfanyl)propylamine + putrescine = S-methyl-5'-thioadenosine + spermidine + H(+). Its pathway is amine and polyamine biosynthesis; spermidine biosynthesis; spermidine from putrescine: step 1/1. In terms of biological role, catalyzes the irreversible transfer of a propylamine group from the amino donor S-adenosylmethioninamine (decarboxy-AdoMet) to putrescine (1,4-diaminobutane) to yield spermidine. The chain is Polyamine aminopropyltransferase 1 from Aquifex aeolicus (strain VF5).